A 492-amino-acid polypeptide reads, in one-letter code: Ribose import ATP-binding protein RbsA (492 aa).

2 consecutive ABC transporter domains span residues 3–239 and 238–492; these read IDMR…VGRK and RKLE…TGGK. 35–42 serves as a coordination point for ATP; that stretch reads GENGAGKS.

The protein belongs to the ABC transporter superfamily. Ribose importer (TC 3.A.1.2.1) family. As to quaternary structure, the complex is composed of an ATP-binding protein (RbsA), two transmembrane proteins (RbsC) and a solute-binding protein (RbsB).

The protein localises to the cell membrane. The catalysed reaction is D-ribose(out) + ATP + H2O = D-ribose(in) + ADP + phosphate + H(+). Functionally, part of the ABC transporter complex RbsABC involved in ribose import. Responsible for energy coupling to the transport system. The chain is Ribose import ATP-binding protein RbsA from Streptococcus agalactiae serotype V (strain ATCC BAA-611 / 2603 V/R).